Consider the following 389-residue polypeptide: UDP-N-acetylglucosamine--N-acetylmuramyl-(pentapeptide) pyrophosphoryl-undecaprenol N-acetylglucosamine transferase (389 aa).

UDP-N-acetyl-alpha-D-glucosamine-binding positions include 17 to 19 (TAG), Asn137, Arg179, Ser213, and Gln308.

Belongs to the glycosyltransferase 28 family. MurG subfamily.

It localises to the cell membrane. The catalysed reaction is di-trans,octa-cis-undecaprenyl diphospho-N-acetyl-alpha-D-muramoyl-L-alanyl-D-glutamyl-meso-2,6-diaminopimeloyl-D-alanyl-D-alanine + UDP-N-acetyl-alpha-D-glucosamine = di-trans,octa-cis-undecaprenyl diphospho-[N-acetyl-alpha-D-glucosaminyl-(1-&gt;4)]-N-acetyl-alpha-D-muramoyl-L-alanyl-D-glutamyl-meso-2,6-diaminopimeloyl-D-alanyl-D-alanine + UDP + H(+). Its pathway is cell wall biogenesis; peptidoglycan biosynthesis. Cell wall formation. Catalyzes the transfer of a GlcNAc subunit on undecaprenyl-pyrophosphoryl-MurNAc-pentapeptide (lipid intermediate I) to form undecaprenyl-pyrophosphoryl-MurNAc-(pentapeptide)GlcNAc (lipid intermediate II). The sequence is that of UDP-N-acetylglucosamine--N-acetylmuramyl-(pentapeptide) pyrophosphoryl-undecaprenol N-acetylglucosamine transferase from Rhodococcus erythropolis (strain PR4 / NBRC 100887).